The primary structure comprises 811 residues: Ent-13-epi-manoyl oxide synthase KSL2, chloroplastic (811 aa).

The N-terminal 49 residues, 1 to 49 (MALPLSTCLLFHPKESRSRRFCFSPASAASLKSGLHSATSAKIASMPTC), are a transit peptide targeting the chloroplast. The Mg(2+) site is built by aspartate 550, aspartate 554, asparagine 694, and glutamate 702. Positions 550 to 554 (DDFFD) match the DDXXD motif motif.

This sequence belongs to the terpene synthase family. Mg(2+) is required as a cofactor.

The protein localises to the plastid. Its subcellular location is the chloroplast. It catalyses the reaction ent-8alpha-hydroxylabd-13-en-15-yl diphosphate = ent-13-epi-manoyl oxide + diphosphate. It participates in secondary metabolite biosynthesis; terpenoid biosynthesis. Involved in diterpenoid biosynthesis. Catalyzes the conversion of ent-8alpha-hydroxylabd-13-en-15-yl diphosphate to ent-13-epi-manoyl oxide. This chain is Ent-13-epi-manoyl oxide synthase KSL2, chloroplastic, found in Salvia miltiorrhiza (Chinese sage).